We begin with the raw amino-acid sequence, 404 residues long: Multidrug resistance protein MdtG (404 aa).

11 helical membrane-spanning segments follow: residues Leu19–Val39, Leu56–Ala76, Leu90–Ile110, Ala113–Val133, Gly149–Leu169, Pro171–Ile191, Leu222–Leu242, Ile254–Pro274, Ile288–Thr308, Phe317–Asn337, and Ala376–Leu396.

This sequence belongs to the major facilitator superfamily. DHA1 family. MdtG (TC 2.A.1.2.20) subfamily.

The protein resides in the cell inner membrane. In Salmonella paratyphi C (strain RKS4594), this protein is Multidrug resistance protein MdtG.